A 271-amino-acid polypeptide reads, in one-letter code: Membrane protein insertase YidC 1 (271 aa).

Residues 1 to 20 form the signal peptide; that stretch reads MKKKLKTFSLILLTGSLLVA. Cysteine 21 carries N-palmitoyl cysteine lipidation. Residue cysteine 21 is the site of S-diacylglycerol cysteine attachment. Transmembrane regions (helical) follow at residues 45–65, 124–144, 163–183, and 201–221; these read IQWLSFNHSIGLGIILFTLII, YASVLPLLIQLPVLWALFQAL, PDPYYILPVLAALFTFLSTWL, and VMPFIILVTSFNFASGVVLYW.

Belongs to the OXA1/ALB3/YidC family. Type 2 subfamily.

It is found in the cell membrane. Its function is as follows. Required for the insertion and/or proper folding and/or complex formation of integral membrane proteins into the membrane. Involved in integration of membrane proteins that insert both dependently and independently of the Sec translocase complex, as well as at least some lipoproteins. The sequence is that of Membrane protein insertase YidC 1 from Streptococcus agalactiae serotype III (strain NEM316).